We begin with the raw amino-acid sequence, 361 residues long: Phospho-N-acetylmuramoyl-pentapeptide-transferase (361 aa).

The next 10 helical transmembrane spans lie at 18–38 (VFNY…ILVL), 73–93 (TMGG…WGDL), 97–117 (FIWV…MDDY), 135–155 (LLQS…ATTG), 168–188 (VLPN…VGSS), 196–216 (GLDG…GVFA), 235–255 (GAGE…GFLW), 263–283 (VFMG…TAVV), 288–308 (LVYF…ILQV), and 338–358 (KVIV…LATL).

It belongs to the glycosyltransferase 4 family. MraY subfamily. Mg(2+) serves as cofactor.

It is found in the cell inner membrane. The catalysed reaction is UDP-N-acetyl-alpha-D-muramoyl-L-alanyl-gamma-D-glutamyl-meso-2,6-diaminopimeloyl-D-alanyl-D-alanine + di-trans,octa-cis-undecaprenyl phosphate = di-trans,octa-cis-undecaprenyl diphospho-N-acetyl-alpha-D-muramoyl-L-alanyl-D-glutamyl-meso-2,6-diaminopimeloyl-D-alanyl-D-alanine + UMP. It functions in the pathway cell wall biogenesis; peptidoglycan biosynthesis. Catalyzes the initial step of the lipid cycle reactions in the biosynthesis of the cell wall peptidoglycan: transfers peptidoglycan precursor phospho-MurNAc-pentapeptide from UDP-MurNAc-pentapeptide onto the lipid carrier undecaprenyl phosphate, yielding undecaprenyl-pyrophosphoryl-MurNAc-pentapeptide, known as lipid I. This Coxiella burnetii (strain CbuK_Q154) (Coxiella burnetii (strain Q154)) protein is Phospho-N-acetylmuramoyl-pentapeptide-transferase.